Consider the following 394-residue polypeptide: Chaperone protein DnaJ (394 aa).

Residues Asp5–Gly75 form the J domain. Residues Gly150–Thr231 form a CR-type zinc finger. Zn(2+)-binding residues include Cys163, Cys166, Cys179, Cys182, Cys205, Cys208, Cys219, and Cys222. CXXCXGXG motif repeat units follow at residues Cys163–Gly170, Cys179–Gly186, Cys205–Gly212, and Cys219–Gly226.

This sequence belongs to the DnaJ family. In terms of assembly, homodimer. Zn(2+) is required as a cofactor.

The protein localises to the cytoplasm. Participates actively in the response to hyperosmotic and heat shock by preventing the aggregation of stress-denatured proteins and by disaggregating proteins, also in an autonomous, DnaK-independent fashion. Unfolded proteins bind initially to DnaJ; upon interaction with the DnaJ-bound protein, DnaK hydrolyzes its bound ATP, resulting in the formation of a stable complex. GrpE releases ADP from DnaK; ATP binding to DnaK triggers the release of the substrate protein, thus completing the reaction cycle. Several rounds of ATP-dependent interactions between DnaJ, DnaK and GrpE are required for fully efficient folding. Also involved, together with DnaK and GrpE, in the DNA replication of plasmids through activation of initiation proteins. In Fusobacterium nucleatum subsp. polymorphum (Fusobacterium polymorphum), this protein is Chaperone protein DnaJ.